The sequence spans 407 residues: MSAPKKVVLAYSGGLDTSIILKWLQTEYGCEVVTFTADLGQGEELEPARKKAELLGIKPENIFIEDIREEFVRDFVFPMFRANAVYEGLYLLGTSIARPLISKRLVEIAEATGADAVSHGATGKGNDQVRFELSAYALNPDIKVIAPWREWDLTSRTKLLEFAEANQIPIAKDKRGEAPFSVDANLLHTSSEGKVLEDPAEMAPDYVYQRTVNPEDAPNEPEFIEITFEKGDAVAINGEAMSPATILTKLNEYGRKHGIGRLDFVENRFVGMKSRGIYEAPGGDILLEAHRGIEQITLDSGAGHLKDSIMPRYAELIYNGFWYSPEREMLQALIDESQKHVTGTVRVKLYKGSAKTVGRWSEHSLYSEAHVTFEEDAGAYDQKDAQGFIQLNALRLKLLAARNRRVK.

Residues 10-18 (AYSGGLDTS) and Ala37 each bind ATP. L-citrulline contacts are provided by Tyr90 and Ser95. ATP is bound at residue Gly120. Residues Thr122, Asn126, and Asp127 each contribute to the L-aspartate site. Asn126 provides a ligand contact to L-citrulline. Positions 130, 181, 190, 266, and 278 each coordinate L-citrulline.

This sequence belongs to the argininosuccinate synthase family. Type 1 subfamily. In terms of assembly, homotetramer.

Its subcellular location is the cytoplasm. The enzyme catalyses L-citrulline + L-aspartate + ATP = 2-(N(omega)-L-arginino)succinate + AMP + diphosphate + H(+). It participates in amino-acid biosynthesis; L-arginine biosynthesis; L-arginine from L-ornithine and carbamoyl phosphate: step 2/3. In Ruegeria sp. (strain TM1040) (Silicibacter sp.), this protein is Argininosuccinate synthase.